We begin with the raw amino-acid sequence, 310 residues long: Haloalkane dehalogenase (310 aa).

The 111-residue stretch at 30–140 (PVVLFLHGNP…PMPTWQDFHH (111 aa)) folds into the AB hydrolase-1 domain. Asp103 functions as the Nucleophile in the catalytic mechanism. Catalysis depends on Glu127, which acts as the Proton donor. The active-site Proton acceptor is His280.

Belongs to the haloalkane dehalogenase family. Type 2 subfamily. As to quaternary structure, monomer.

It catalyses the reaction 1-haloalkane + H2O = a halide anion + a primary alcohol + H(+). Functionally, catalyzes hydrolytic cleavage of carbon-halogen bonds in halogenated aliphatic compounds, leading to the formation of the corresponding primary alcohols, halide ions and protons. The polypeptide is Haloalkane dehalogenase (Bradyrhizobium diazoefficiens (strain JCM 10833 / BCRC 13528 / IAM 13628 / NBRC 14792 / USDA 110)).